A 118-amino-acid polypeptide reads, in one-letter code: NADH-ubiquinone oxidoreductase chain 3 (118 aa).

3 helical membrane-spanning segments follow: residues 1–21 (MLFFAVLGLLFFLIFFLVLVF), 59–79 (YTYFILLVFFVVFDLEVSLLL), and 86–106 (VLYKNFFSYLFFLVLLGIGFL).

The protein belongs to the complex I subunit 3 family.

The protein resides in the mitochondrion membrane. The enzyme catalyses a ubiquinone + NADH + 5 H(+)(in) = a ubiquinol + NAD(+) + 4 H(+)(out). Core subunit of the mitochondrial membrane respiratory chain NADH dehydrogenase (Complex I) that is believed to belong to the minimal assembly required for catalysis. Complex I functions in the transfer of electrons from NADH to the respiratory chain. The immediate electron acceptor for the enzyme is believed to be ubiquinone. In Fasciola hepatica (Liver fluke), this protein is NADH-ubiquinone oxidoreductase chain 3 (ND3).